The chain runs to 439 residues: Perilipin-3 (439 aa).

Positions 1–19 (MFASETEASASSTQVTTEE) are enriched in low complexity. Residues 1–26 (MFASETEASASSTQVTTEEPVQQPSV) form a disordered region. Lysine 66 is subject to N6-acetyllysine. A Phosphoserine modification is found at serine 92. Lysine 123 participates in a covalent cross-link: Glycyl lysine isopeptide (Lys-Gly) (interchain with G-Cter in SUMO1). Serine 131 is modified (phosphoserine). Threonine 175 carries the phosphothreonine modification. Residues serine 180 and serine 184 each carry the phosphoserine modification. Threonine 221 bears the Phosphothreonine mark. 2 positions are modified to phosphoserine: serine 222 and serine 246. Coiled coils occupy residues 254–282 (RAYE…QALS) and 358–381 (AHVK…FSGM). The residue at position 256 (tyrosine 256) is a Phosphotyrosine.

The protein belongs to the perilipin family. Homooligomer. Interacts with M6PR (via the cytoplasmic domain). Interacts with IGF2R (via the cytoplasmic domain). Post-translationally, phosphorylation at Tyr-256 by isoform 1 of CHKA (CHKalpha2) promotes dissociation from lipid droplets: dissociation is followed by recruitment of autophagosome machinery to lipid droplets and subsequent lipid droplet lipolysis.

Its subcellular location is the lipid droplet. It localises to the endosome membrane. It is found in the cytoplasm. Structural component of lipid droplets, which is required for the formation and maintenance of lipid storage droplets. Required for the transport of mannose 6-phosphate receptors (MPR) from endosomes to the trans-Golgi network. In Sus scrofa (Pig), this protein is Perilipin-3 (PLIN3).